The following is a 162-amino-acid chain: 2-C-methyl-D-erythritol 2,4-cyclodiphosphate synthase (162 aa).

D8 and H10 together coordinate a divalent metal cation. 4-CDP-2-C-methyl-D-erythritol 2-phosphate-binding positions include 8 to 10 and 36 to 37; these read DVH and HS. Residue H44 participates in a divalent metal cation binding. 4-CDP-2-C-methyl-D-erythritol 2-phosphate contacts are provided by residues 58–60, 63–67, 102–108, 134–137, F141, and R144; these read DIG, FPDTD, AQAPKMA, and TTTE.

It belongs to the IspF family. As to quaternary structure, homotrimer. The cofactor is a divalent metal cation.

The catalysed reaction is 4-CDP-2-C-methyl-D-erythritol 2-phosphate = 2-C-methyl-D-erythritol 2,4-cyclic diphosphate + CMP. It functions in the pathway isoprenoid biosynthesis; isopentenyl diphosphate biosynthesis via DXP pathway; isopentenyl diphosphate from 1-deoxy-D-xylulose 5-phosphate: step 4/6. Involved in the biosynthesis of isopentenyl diphosphate (IPP) and dimethylallyl diphosphate (DMAPP), two major building blocks of isoprenoid compounds. Catalyzes the conversion of 4-diphosphocytidyl-2-C-methyl-D-erythritol 2-phosphate (CDP-ME2P) to 2-C-methyl-D-erythritol 2,4-cyclodiphosphate (ME-CPP) with a corresponding release of cytidine 5-monophosphate (CMP). The protein is 2-C-methyl-D-erythritol 2,4-cyclodiphosphate synthase of Yersinia pseudotuberculosis serotype O:1b (strain IP 31758).